The primary structure comprises 243 residues: Proteasome subunit beta (243 aa).

The segment at 1 to 46 (MFNPNNGSEFARNRARLDDTPNPYEPEVGSLPEGDRSQAGSDTVNK) is disordered. The propeptide at 1-48 (MFNPNNGSEFARNRARLDDTPNPYEPEVGSLPEGDRSQAGSDTVNKTG) is removed in mature form; by autocatalysis. Thr49 acts as the Nucleophile in catalysis.

It belongs to the peptidase T1B family. In terms of assembly, the 20S proteasome core is composed of 14 alpha and 14 beta subunits that assemble into four stacked heptameric rings, resulting in a barrel-shaped structure. The two inner rings, each composed of seven catalytic beta subunits, are sandwiched by two outer rings, each composed of seven alpha subunits. The catalytic chamber with the active sites is on the inside of the barrel. Has a gated structure, the ends of the cylinder being occluded by the N-termini of the alpha-subunits. Is capped at one or both ends by the proteasome regulatory ATPase, PAN.

The protein localises to the cytoplasm. The enzyme catalyses Cleavage of peptide bonds with very broad specificity.. The formation of the proteasomal ATPase PAN-20S proteasome complex, via the docking of the C-termini of PAN into the intersubunit pockets in the alpha-rings, triggers opening of the gate for substrate entry. Interconversion between the open-gate and close-gate conformations leads to a dynamic regulation of the 20S proteasome proteolysis activity. Component of the proteasome core, a large protease complex with broad specificity involved in protein degradation. The protein is Proteasome subunit beta of Halobacterium salinarum (strain ATCC 29341 / DSM 671 / R1).